The primary structure comprises 425 residues: Trigger factor (425 aa).

One can recognise a PPIase FKBP-type domain in the interval 158-231 (GDLVRISMEV…VQEVYRRTLP (74 aa)).

This sequence belongs to the FKBP-type PPIase family. Tig subfamily.

Its subcellular location is the cytoplasm. It carries out the reaction [protein]-peptidylproline (omega=180) = [protein]-peptidylproline (omega=0). Its function is as follows. Involved in protein export. Acts as a chaperone by maintaining the newly synthesized protein in an open conformation. Functions as a peptidyl-prolyl cis-trans isomerase. This chain is Trigger factor, found in Thermotoga neapolitana (strain ATCC 49049 / DSM 4359 / NBRC 107923 / NS-E).